A 326-amino-acid chain; its full sequence is Endochitinase (326 aa).

The signal sequence occupies residues 1-25 (MVYCTASLPLLLLLLVGLLAGEAFA). Positions 26–66 (EQCGRQAGGALCPGGLCCSQFGWCGSTSDYCGPTCQSQCGG) constitute a Chitin-binding type-1 domain. 7 disulfide bridges follow: Cys28–Cys43, Cys37–Cys49, Cys42–Cys56, Cys60–Cys64, Cys96–Cys158, Cys170–Cys178, and Cys277–Cys309. The active-site Proton donor is Glu140.

The protein belongs to the glycosyl hydrolase 19 family. Chitinase class I subfamily. In terms of tissue distribution, expressed in the pulp of the fruit (at protein level). Expressed in mesocarp (at protein level).

The enzyme catalyses Random endo-hydrolysis of N-acetyl-beta-D-glucosaminide (1-&gt;4)-beta-linkages in chitin and chitodextrins.. Defense against chitin-containing fungal pathogens. Has in vitro antifungal activity against F.oxysporum inhibiting its growth and the branching of its hyphae. Has endochitinase activity, but no exochitinase or lysozyme activities. The sequence is that of Endochitinase from Persea americana (Avocado).